We begin with the raw amino-acid sequence, 694 residues long: Ubiquitin-like modifier-activating enzyme ATG7 (694 aa).

Residues 370–375 (GAGTLG) carry the GXGXXG motif motif. C550 acts as the Glycyl thioester intermediate in catalysis. A homodimerization region spans residues 650 to 689 (ALQEKEYVAELSGLAEVQRRAEEMAAHVDWEEDDDLVDDG).

This sequence belongs to the ATG7 family. As to quaternary structure, homodimer. Interacts with ATG8 through a thioester bond between Cys-550 and the C-terminal 'Gly-116' of ATG8 and with ATG12 through a thioester bond between Cys-550 and the C-terminal 'Gly-160' of ATG12. Also interacts with ATG3.

The protein resides in the cytoplasm. Its subcellular location is the preautophagosomal structure. Functionally, E1-like activating enzyme involved in the 2 ubiquitin-like systems required for cytoplasm to vacuole transport (Cvt) and autophagy. Activates ATG12 for its conjugation with ATG5 and ATG8 for its conjugation with phosphatidylethanolamine. Both systems are needed for the ATG8 association to Cvt vesicles and autophagosomes membranes. Autophagy is essential for maintenance of amino acid levels and protein synthesis under nitrogen starvation. Required for selective autophagic degradation of the nucleus (nucleophagy) as well as for mitophagy which contributes to regulate mitochondrial quantity and quality by eliminating the mitochondria to a basal level to fulfill cellular energy requirements and preventing excess ROS production. Autophagy is required for proper vegetative growth, asexual/sexual reproduction, and full virulence. Autophagy is particularly involved in the biosynthesis of deoxynivalenol (DON), an important virulence determinant. In Gibberella zeae (strain ATCC MYA-4620 / CBS 123657 / FGSC 9075 / NRRL 31084 / PH-1) (Wheat head blight fungus), this protein is Ubiquitin-like modifier-activating enzyme ATG7.